The primary structure comprises 130 residues: Protein ApaG (130 aa).

In terms of domain architecture, ApaG spans 3-127 (SAVTRGIEVT…FSLDVPEQRR (125 aa)).

The protein is Protein ApaG of Brucella canis (strain ATCC 23365 / NCTC 10854 / RM-666).